Consider the following 856-residue polypeptide: Protein translocase subunit SecA (856 aa).

Residues Q77, 95–99, and D534 contribute to the ATP site; that span reads GEGKT.

It belongs to the SecA family. Monomer and homodimer. Part of the essential Sec protein translocation apparatus which comprises SecA, SecYEG and auxiliary proteins SecDF. Other proteins may also be involved.

It is found in the cell inner membrane. The protein localises to the cytoplasm. The catalysed reaction is ATP + H2O + cellular proteinSide 1 = ADP + phosphate + cellular proteinSide 2.. Part of the Sec protein translocase complex. Interacts with the SecYEG preprotein conducting channel. Has a central role in coupling the hydrolysis of ATP to the transfer of proteins into and across the cell membrane, serving as an ATP-driven molecular motor driving the stepwise translocation of polypeptide chains across the membrane. In Thermosipho africanus (strain TCF52B), this protein is Protein translocase subunit SecA.